Here is a 379-residue protein sequence, read N- to C-terminus: Cytoplasmic tRNA 2-thiolation protein 1 (379 aa).

The protein belongs to the TtcA family. CTU1/NCS6/ATPBD3 subfamily.

Its subcellular location is the cytoplasm. It participates in tRNA modification; 5-methoxycarbonylmethyl-2-thiouridine-tRNA biosynthesis. In terms of biological role, plays a central role in 2-thiolation of mcm(5)S(2)U at tRNA wobble positions of tRNA(Lys), tRNA(Glu) and tRNA(Gln). Directly binds tRNAs and probably acts by catalyzing adenylation of tRNAs, an intermediate required for 2-thiolation. It is unclear whether it acts as a sulfurtransferase that transfers sulfur from thiocarboxylated URM1 onto the uridine of tRNAs at wobble position. Prior mcm(5) tRNA modification by the elongator complex is required for 2-thiolation. May also be involved in protein urmylation. The protein is Cytoplasmic tRNA 2-thiolation protein 1 of Lodderomyces elongisporus (strain ATCC 11503 / CBS 2605 / JCM 1781 / NBRC 1676 / NRRL YB-4239) (Yeast).